The primary structure comprises 436 residues: Arginine-hydroxylase NDUFAF5, mitochondrial (436 aa).

Residues 1–25 (MLRTTFRKGFNLKCFSKDWNQTRQY) constitute a mitochondrion transit peptide. The tract at residues 365 to 436 (VTLSQQQQQQ…DEINKNKDDK (72 aa)) is disordered. The segment covering 369 to 380 (QQQQQQGIEPQQ) has biased composition (low complexity). Composition is skewed to basic and acidic residues over residues 391-411 (PKTDDFVIKRLDYHGNFHFEK) and 421-436 (QNKESSDEINKNKDDK).

The protein belongs to the methyltransferase superfamily.

It localises to the mitochondrion. Its function is as follows. Involved in the assembly of mitochondrial NADH:ubiquinone oxidoreductase complex (complex I, MT-ND1) at early stages. Probably acts as an arginine hydroxylase. May also have methyltransferase activity. In Dictyostelium discoideum (Social amoeba), this protein is Arginine-hydroxylase NDUFAF5, mitochondrial.